The following is a 356-amino-acid chain: Chorismate synthase (356 aa).

Position 46 (arginine 46) interacts with NADP(+). Residues arginine 122–serine 124, asparagine 234–glycine 235, glycine 274, lysine 289–serine 293, and arginine 315 contribute to the FMN site.

This sequence belongs to the chorismate synthase family. As to quaternary structure, homotetramer. It depends on FMNH2 as a cofactor.

It catalyses the reaction 5-O-(1-carboxyvinyl)-3-phosphoshikimate = chorismate + phosphate. It functions in the pathway metabolic intermediate biosynthesis; chorismate biosynthesis; chorismate from D-erythrose 4-phosphate and phosphoenolpyruvate: step 7/7. In terms of biological role, catalyzes the anti-1,4-elimination of the C-3 phosphate and the C-6 proR hydrogen from 5-enolpyruvylshikimate-3-phosphate (EPSP) to yield chorismate, which is the branch point compound that serves as the starting substrate for the three terminal pathways of aromatic amino acid biosynthesis. This reaction introduces a second double bond into the aromatic ring system. In Campylobacter fetus subsp. fetus (strain 82-40), this protein is Chorismate synthase.